A 1171-amino-acid chain; its full sequence is ATP-dependent helicase/deoxyribonuclease subunit B (1171 aa).

The UvrD-like helicase ATP-binding domain maps to 1 to 390 (MSLRFVIGRA…HPLVECIRSA (390 aa)). 8–15 (GRAGSGKS) is a binding site for ATP. One can recognise a UvrD-like helicase C-terminal domain in the interval 281–587 (MEQPRFHSPA…QFANIPPSLD (307 aa)). Positions 805, 1129, 1132, and 1138 each coordinate [4Fe-4S] cluster.

Belongs to the helicase family. AddB/RexB type 1 subfamily. As to quaternary structure, heterodimer of AddA and AddB. Mg(2+) is required as a cofactor. The cofactor is [4Fe-4S] cluster.

In terms of biological role, the heterodimer acts as both an ATP-dependent DNA helicase and an ATP-dependent, dual-direction single-stranded exonuclease. Recognizes the chi site generating a DNA molecule suitable for the initiation of homologous recombination. The AddB subunit has 5' -&gt; 3' nuclease activity but not helicase activity. The sequence is that of ATP-dependent helicase/deoxyribonuclease subunit B from Bacillus cereus (strain B4264).